The primary structure comprises 589 residues: ATP-dependent lipid A-core flippase (589 aa).

Transmembrane regions (helical) follow at residues 29 to 49, 70 to 90, 157 to 177, 261 to 281, and 283 to 303; these read LLLV…TGFL, WLPV…YITD, VIGA…TILV, MIGA…ALAG, and LTAG…PGLK. Residues 32–314 enclose the ABC transmembrane type-1 domain; the sequence is VAALIAALIE…LTNVQNMVQR (283 aa). The ABC transporter domain occupies 346-582; sequence IEFRDVTARY…GGLYSHLHGM (237 aa). 380-387 serves as a coordination point for ATP; it reads GRSGSGKS.

The protein belongs to the ABC transporter superfamily. Lipid exporter (TC 3.A.1.106) family. In terms of assembly, homodimer.

The protein localises to the cell inner membrane. The enzyme catalyses ATP + H2O + lipid A-core oligosaccharideSide 1 = ADP + phosphate + lipid A-core oligosaccharideSide 2.. Involved in lipopolysaccharide (LPS) biosynthesis. Translocates lipid A-core from the inner to the outer leaflet of the inner membrane. Transmembrane domains (TMD) form a pore in the inner membrane and the ATP-binding domain (NBD) is responsible for energy generation. The polypeptide is ATP-dependent lipid A-core flippase (Xanthomonas euvesicatoria pv. vesicatoria (strain 85-10) (Xanthomonas campestris pv. vesicatoria)).